A 71-amino-acid polypeptide reads, in one-letter code: Long neurotoxin 2 (71 aa).

5 cysteine pairs are disulfide-bonded: Cys-3-Cys-20, Cys-14-Cys-41, Cys-26-Cys-30, Cys-45-Cys-56, and Cys-57-Cys-62.

Belongs to the three-finger toxin family. Long-chain subfamily. Type II alpha-neurotoxin sub-subfamily. In terms of tissue distribution, expressed by the venom gland.

It is found in the secreted. In terms of biological role, binds with high affinity to muscular (alpha-1/CHRNA1) and neuronal (alpha-7/CHRNA7) nicotinic acetylcholine receptor (nAChR) and inhibits acetylcholine from binding to the receptor, thereby impairing neuromuscular and neuronal transmission. The protein is Long neurotoxin 2 of Naja naja (Indian cobra).